Consider the following 471-residue polypeptide: (13S,14R)-1,13-dihydroxy-N-methylcanadine 13-O-acetyltransferase AT1 (471 aa).

The protein belongs to the plant acyltransferase family.

The catalysed reaction is (13S,14R)-1,13-dihydroxy-N-methylcanadine + acetyl-CoA = (13S,14R)-13-O-acetyl-1-hydroxy-N-methylcanadine + CoA. The protein operates within alkaloid biosynthesis. In terms of biological role, acetyltransferase involved in the biosynthesis of the benzylisoquinoline alkaloid noscapine. Converts (13S,14R)-1,13-dihydroxy-N-methylcanadine to (13S,14R)-13-O-acetyl-1-hydroxy-N-methylcanadine. The protein is (13S,14R)-1,13-dihydroxy-N-methylcanadine 13-O-acetyltransferase AT1 of Papaver somniferum (Opium poppy).